A 137-amino-acid chain; its full sequence is Protein MGF 110-7L (137 aa).

A signal peptide spans Met1–Ser20. 3 N-linked (GlcNAc...) asparagine; by host glycosylation sites follow: Asn69, Asn70, and Asn105.

The protein belongs to the asfivirus MGF 110 family.

Functionally, plays a role in virus cell tropism, and may be required for efficient virus replication in macrophages. The protein is Protein MGF 110-7L of African swine fever virus (isolate Warthog/Namibia/Wart80/1980) (ASFV).